The primary structure comprises 721 residues: Polyribonucleotide nucleotidyltransferase (721 aa).

2 residues coordinate Mg(2+): aspartate 487 and aspartate 493. The KH domain occupies 554-613 (PRIETFKIPTDKIREVIGTGGKVIREIVEKTGAKVNIDDDGTVKVASSDGESIKAAIKWI). Positions 623–691 (NAIYDGTVVK…DRGKTRLSMK (69 aa)) constitute an S1 motif domain. The segment at 697–721 (TGEDLEAKQKAEAEKAKAEGAPAAE) is disordered. Residues 701 to 714 (LEAKQKAEAEKAKA) are compositionally biased toward basic and acidic residues.

The protein belongs to the polyribonucleotide nucleotidyltransferase family. It depends on Mg(2+) as a cofactor.

The protein resides in the cytoplasm. It catalyses the reaction RNA(n+1) + phosphate = RNA(n) + a ribonucleoside 5'-diphosphate. Involved in mRNA degradation. Catalyzes the phosphorolysis of single-stranded polyribonucleotides processively in the 3'- to 5'-direction. The polypeptide is Polyribonucleotide nucleotidyltransferase (Rhodopseudomonas palustris (strain BisA53)).